A 283-amino-acid chain; its full sequence is MHFFSPAKLNIFLQLLGKREDGFHEIVTRYQAVSFGDQLSLSVSSRDSFQIINDCQLEISNNSIWKSTALFRQYTGITDPVSWRVVKHIPIGSGLAGGSSNAATALFALNQMFQTGLSDEELRSLAEKVGMDTPFFFSSGSALGLGRGEKVVTLNELVVDRYILYFSNKGVLTSEAFAVVKPSDCSLSKDLEYARNDLENPVFRLRLDLKEKKRWLEDLWKGIPVYVGLTGSGATLFVRYPKALEKNSAYATQIQKIIALSGGVSTSPIQRDTPNWYPTILEA.

Residue Lys8 is part of the active site. 90–100 (PIGSGLAGGSS) contributes to the ATP binding site. The active site involves Asp132.

The protein belongs to the GHMP kinase family. IspE subfamily.

It carries out the reaction 4-CDP-2-C-methyl-D-erythritol + ATP = 4-CDP-2-C-methyl-D-erythritol 2-phosphate + ADP + H(+). Its pathway is isoprenoid biosynthesis; isopentenyl diphosphate biosynthesis via DXP pathway; isopentenyl diphosphate from 1-deoxy-D-xylulose 5-phosphate: step 3/6. Its function is as follows. Catalyzes the phosphorylation of the position 2 hydroxy group of 4-diphosphocytidyl-2C-methyl-D-erythritol. The sequence is that of 4-diphosphocytidyl-2-C-methyl-D-erythritol kinase from Chlamydia muridarum (strain MoPn / Nigg).